Reading from the N-terminus, the 785-residue chain is MDRVLSRADKERLLELLKLPRQLWGDFGRMQQAYKQQSLLLHPDKGGSHALMQELNSLWGTFKTEVYNLRMNLGGTGFQGSPPRTAERGTEESGHSPLHDDYWSFSYGSKYFTREWNDFFRKWDPSYQSPPKTAESSEQPDLFCYEEPLLSPNPSSPTDTPAHTAGRRRNPCVAEPDDSISPDPPRTPVSRKRPRPAGATGGGGGGVHANGGSVFGHPTGGTSTPAHPPPYHSQGGSESMGGSDSSGFAEGSFRSDPRCESENESYSQSCSQSSFNATPPKKAREDPAPSDFPSSLTGYLSHAIYSNKTFPAFLVYSTKEKCKQLYDTIGKFRPEFKCLVHYEEGGMLFFLTMTKHRVSAVKNYCSKLCRSFLMCKAVTKPMECYQVVTAAPFQLITENKPGLHQFEFTDEPEEQKAVDWIMVADFALENNLDDPLLIMGYYLDFAKEVPSCIKCSKEETRLQIHWKNHRKHAENADLFLNCKAQKTICQQAAASLASRRLKLVECTRSQLLKERLQQSLLRLKELGSSDALLYLAGVAWYQCLLEDFPQTLFKMLKLLTENVPKRRNILFRGPVNSGKTGLAAALISLLGGKSLNINCPADKLAFELGVAQDQFVVCFEDVKGQIALNKQLQPGMGVANLDNLRTTWNGSVKVNLEKKHSNKRSQLFPPCVCTMNEYLLPQTVWARFHMVLDFTCKPHLAQSLEKCEFLQRERIIQSGDTLALLLIWNFTSDVFDPDIQGLVKEVRDQFASECSYSLFCDILCNVQEGDDPLKDICDIAEYTVY.

At Met1 the chain carries N-acetylmethionine; by host. The J domain occupies 12–75 (RLLELLKLPR…VYNLRMNLGG (64 aa)). Disordered stretches follow at residues 74–97 (GGTGFQGSPPRTAERGTEESGHSP) and 145–291 (YEEP…APSD). Positions 85-97 (TAERGTEESGHSP) are enriched in basic and acidic residues. The LXCXE motif motif lies at 142–146 (LFCYE). Positions 148–161 (PLLSPNPSSPTDTP) are enriched in low complexity. Gly residues predominate over residues 199–209 (ATGGGGGGVHA). Composition is skewed to low complexity over residues 233–247 (SQGGSESMGGSDSSG) and 264–274 (ESYSQSCSQSS). A Phosphothreonine; by host modification is found at Thr278. The Nuclear localization signal signature appears at 279 to 286 (PPKKARED). A DNA-binding region (T-ag OBD) is located at residues 293–406 (PSSLTGYLSH…TENKPGLHQF (114 aa)). A T-ag D1-type zinc finger spans residues 415-508 (QKAVDWIMVA…RRLKLVECTR (94 aa)). Residues Cys452, Cys455, His465, and His469 each contribute to the Zn(2+) site. Residues 547-707 (DFPQTLFKML…PHLAQSLEKC (161 aa)) form the SF3 helicase domain. 573 to 580 (GPVNSGKT) is a binding site for ATP.

As to quaternary structure, forms homohexamers in the presence of ATP. Interacts with host HDAC1. Interacts (via LXCXE domain) with host RB1; the interaction induces the aberrant dissociation of RB1-E2F1 complex thereby disrupting RB1's activity. Interacts (via LXCXE domain) with host pRB-related proteins RBL1 and RBL2. Interacts (via C-terminus) with host TOP1 and POLA1 allowing DNA replication. Interacts with host preinitiation complex components TBP, TFIIA and TFIID to regulate transcription initiation. Requires Mg(2+) as cofactor. In terms of processing, phosphorylated on both serine and threonine residues. Small t antigen inhibits the dephosphorylation by the AC form of PP2A. O-Glycosylated near the C-terminal region. Post-translationally, acetylated by CBP in a TP53-dependent manner.

Its subcellular location is the host nucleus. The enzyme catalyses Couples ATP hydrolysis with the unwinding of duplex DNA by translocating in the 3'-5' direction.. It carries out the reaction ATP + H2O = ADP + phosphate + H(+). Isoform large T antigen is a key early protein essential for both driving viral replication and inducing cellular transformation. Plays a role in viral genome replication by driving entry of quiescent cells into the cell cycle and by autoregulating the synthesis of viral early mRNA. Displays highly oncogenic activities by corrupting the host cellular checkpoint mechanisms that guard cell division and the transcription, replication, and repair of DNA. Participates in the modulation of cellular gene expression preceeding viral DNA replication. This step involves binding to host key cell cycle regulators retinoblastoma protein RB1/pRb and TP53. Induces the disassembly of host E2F1 transcription factors from RB1, thus promoting transcriptional activation of E2F1-regulated S-phase genes. Inhibits host TP53 binding to DNA, abrogating the ability of TP53 to stimulate gene expression. Plays the role of a TFIID-associated factor (TAF) in transcription initiation for all three RNA polymerases, by stabilizing the TBP-TFIIA complex on promoters. Initiates viral DNA replication and unwinding via interactions with the viral origin of replication. Binds two adjacent sites in the SV40 origin. The replication fork movement is facilitated by Large T antigen helicase activity. Has processive 3'-5' DNA helicase activity which requires a short 3' single-stranded region and ATP. Activates the transcription of viral late mRNA, through host TBP and TFIIA stabilization. Interferes with histone deacetylation mediated by HDAC1, leading to activation of transcription. The polypeptide is Large T antigen (Mus musculus (Mouse)).